Consider the following 190-residue polypeptide: Cytoglobin (190 aa).

The interval 1–21 (MEKVPGDMEIERRERSEELSE) is disordered. The Globin domain occupies 18–167 (ELSEAERKAV…IYSHVTAAYK (150 aa)). Cysteine 38 and cysteine 83 are joined by a disulfide. Heme b-binding residues include histidine 81 and histidine 113.

It belongs to the globin family. Monomeric. Homodimer; disulfide-linked in vitro. Also homooligomeric in vitro. Post-translationally, the formation of an intramolecular disulfide bond between cysteines Cys-38 and Cys-83 specifically enhances the nitrite reductase activity. As to expression, expressed in brain and retina by non-neuronal cells (at protein level). This is the major globin expressed in vascular smooth muscle and is not present in the endothelium (at protein level).

It localises to the cytoplasm. Its subcellular location is the nucleus. The catalysed reaction is Fe(II)-heme b-[protein] + nitric oxide + O2 = Fe(III)-heme b-[protein] + nitrate. The enzyme catalyses 2 superoxide + 2 H(+) = H2O2 + O2. It catalyses the reaction Fe(III)-heme b-[protein] + nitric oxide + H2O = Fe(II)-heme b-[protein] + nitrite + 2 H(+). It carries out the reaction H2O2 + AH2 = A + 2 H2O. The nitric oxide dioxygenase activity is activated by a reducing system composed of cytochrome b5, its upstream reductase CYB5R3 and NADH. In terms of biological role, probable multifunctional globin with a hexacoordinated heme iron required for the catalysis of various reactions depending on redox condition of the cell as well as oxygen availability. Has a nitric oxide dioxygenase (NOD) activity and is most probably involved in cell-mediated and oxygen-dependent nitric oxide consumption. By scavenging this second messenger may regulate several biological processes including endothelium-mediated vasodilation and vascular tone. Under normoxic conditions functions as a nitric oxide dioxygenase (NOD) but under hypoxic conditions the globin may switch its function to that of a nitrite (NO2) reductase (NiR), generating nitric oxide. Could also have peroxidase and superoxide dismutase activities, detoxifying reactive oxygen species and protecting cells against oxidative stress. Also binds dioxygen with low affinity and could function as an oxygen sensor but has probably no function as a respiratory oxygen carrier. The polypeptide is Cytoglobin (Mus musculus (Mouse)).